A 224-amino-acid polypeptide reads, in one-letter code: UPF0173 metal-dependent hydrolase TTHA1283 (224 aa).

It belongs to the UPF0173 family.

This chain is UPF0173 metal-dependent hydrolase TTHA1283, found in Thermus thermophilus (strain ATCC 27634 / DSM 579 / HB8).